Reading from the N-terminus, the 150-residue chain is Triosephosphate isomerase (150 aa).

Substrate contacts are provided by N9 and K11. Catalysis depends on H95, which acts as the Electrophile.

This sequence belongs to the triosephosphate isomerase family. Homodimer.

The protein localises to the cytoplasm. It carries out the reaction D-glyceraldehyde 3-phosphate = dihydroxyacetone phosphate. It participates in carbohydrate biosynthesis; gluconeogenesis. It functions in the pathway carbohydrate degradation; glycolysis; D-glyceraldehyde 3-phosphate from glycerone phosphate: step 1/1. The chain is Triosephosphate isomerase (tpiA) from Mycoplasmoides pirum (Mycoplasma pirum).